A 114-amino-acid polypeptide reads, in one-letter code: T cell receptor beta variable 6-9 (114 aa).

The first 21 residues, 1–21 (MSIGLLCCVAFSLLWAGPVNA), serve as a signal peptide directing secretion. Residues 22 to 114 (GVTQTPKFHI…TSVYFCASSY (93 aa)) enclose the Ig-like domain. Cys-42 and Cys-110 are oxidised to a cystine. Residue Asn-84 is glycosylated (N-linked (GlcNAc...) asparagine).

As to quaternary structure, alpha-beta TR is a heterodimer composed of an alpha and beta chain; disulfide-linked. The alpha-beta TR is associated with the transmembrane signaling CD3 coreceptor proteins to form the TR-CD3 (TcR or TCR). The assembly of alpha-beta TR heterodimers with CD3 occurs in the endoplasmic reticulum where a single alpha-beta TR heterodimer associates with one CD3D-CD3E heterodimer, one CD3G-CD3E heterodimer and one CD247 homodimer forming a stable octameric structure. CD3D-CD3E and CD3G-CD3E heterodimers preferentially associate with TR alpha and TR beta chains, respectively. The association of the CD247 homodimer is the last step of TcR assembly in the endoplasmic reticulum and is required for transport to the cell surface.

It is found in the cell membrane. V region of the variable domain of T cell receptor (TR) beta chain that participates in the antigen recognition. Alpha-beta T cell receptors are antigen specific receptors which are essential to the immune response and are present on the cell surface of T lymphocytes. Recognize peptide-major histocompatibility (MH) (pMH) complexes that are displayed by antigen presenting cells (APC), a prerequisite for efficient T cell adaptive immunity against pathogens. Binding of alpha-beta TR to pMH complex initiates TR-CD3 clustering on the cell surface and intracellular activation of LCK that phosphorylates the ITAM motifs of CD3G, CD3D, CD3E and CD247 enabling the recruitment of ZAP70. In turn ZAP70 phosphorylates LAT, which recruits numerous signaling molecules to form the LAT signalosome. The LAT signalosome propagates signal branching to three major signaling pathways, the calcium, the mitogen-activated protein kinase (MAPK) kinase and the nuclear factor NF-kappa-B (NF-kB) pathways, leading to the mobilization of transcription factors that are critical for gene expression and essential for T cell growth and differentiation. The T cell repertoire is generated in the thymus, by V-(D)-J rearrangement. This repertoire is then shaped by intrathymic selection events to generate a peripheral T cell pool of self-MH restricted, non-autoaggressive T cells. Post-thymic interaction of alpha-beta TR with the pMH complexes shapes TR structural and functional avidity. This Homo sapiens (Human) protein is T cell receptor beta variable 6-9.